We begin with the raw amino-acid sequence, 179 residues long: Phospholipase A2 (179 aa).

The first 21 residues, 1–21, serve as a signal peptide directing secretion; sequence MHALRSSVLALWLCLHVSVRA. Positions 22–39 are excised as a propeptide; sequence WMTYRSANGLDEYEPEDR. Ca(2+) is bound by residues tryptophan 47, glycine 49, and glycine 51. 5 cysteine pairs are disulfide-bonded: cysteine 48-cysteine 70, cysteine 69-cysteine 109, cysteine 76-cysteine 102, cysteine 100-cysteine 133, and cysteine 142-cysteine 150. The active site involves histidine 73. Aspartate 74 is a Ca(2+) binding site. Residue aspartate 103 is part of the active site. The N-linked (GlcNAc...) asparagine glycan is linked to asparagine 112.

Requires Ca(2+) as cofactor. In terms of tissue distribution, expressed by the venom gland.

Its subcellular location is the secreted. It catalyses the reaction a 1,2-diacyl-sn-glycero-3-phosphocholine + H2O = a 1-acyl-sn-glycero-3-phosphocholine + a fatty acid + H(+). PLA2 catalyzes the calcium-dependent hydrolysis of the 2-acyl groups in 3-sn-phosphoglycerides. In Xylocopa appendiculata circumvolans (Japanese carpenter bee), this protein is Phospholipase A2.